The following is a 246-amino-acid chain: tRNA pseudouridine synthase A (246 aa).

Residue aspartate 52 is the Nucleophile of the active site. Residue tyrosine 111 participates in substrate binding.

This sequence belongs to the tRNA pseudouridine synthase TruA family. As to quaternary structure, homodimer.

It carries out the reaction uridine(38/39/40) in tRNA = pseudouridine(38/39/40) in tRNA. Functionally, formation of pseudouridine at positions 38, 39 and 40 in the anticodon stem and loop of transfer RNAs. This Borrelia garinii subsp. bavariensis (strain ATCC BAA-2496 / DSM 23469 / PBi) (Borreliella bavariensis) protein is tRNA pseudouridine synthase A.